Here is a 443-residue protein sequence, read N- to C-terminus: Ribosomal protein uS12 methylthiotransferase RimO (443 aa).

The region spanning 6 to 116 (PRVGMISLGC…VVNAVHDVVP (111 aa)) is the MTTase N-terminal domain. [4Fe-4S] cluster-binding residues include Cys15, Cys51, Cys80, Cys149, Cys153, and Cys156. In terms of domain architecture, Radical SAM core spans 135–373 (LTPRHYAYLK…MAHQQAISAA (239 aa)). One can recognise a TRAM domain in the interval 376–443 (QMKIGKEIEV…DEYDLWAEML (68 aa)).

It belongs to the methylthiotransferase family. RimO subfamily. [4Fe-4S] cluster serves as cofactor.

Its subcellular location is the cytoplasm. The catalysed reaction is L-aspartate(89)-[ribosomal protein uS12]-hydrogen + (sulfur carrier)-SH + AH2 + 2 S-adenosyl-L-methionine = 3-methylsulfanyl-L-aspartate(89)-[ribosomal protein uS12]-hydrogen + (sulfur carrier)-H + 5'-deoxyadenosine + L-methionine + A + S-adenosyl-L-homocysteine + 2 H(+). In terms of biological role, catalyzes the methylthiolation of an aspartic acid residue of ribosomal protein uS12. The sequence is that of Ribosomal protein uS12 methylthiotransferase RimO from Pseudomonas syringae pv. tomato (strain ATCC BAA-871 / DC3000).